We begin with the raw amino-acid sequence, 121 residues long: Large ribosomal subunit protein uL18 (121 aa).

It belongs to the universal ribosomal protein uL18 family. As to quaternary structure, part of the 50S ribosomal subunit; part of the 5S rRNA/L5/L18/L25 subcomplex. Contacts the 5S and 23S rRNAs.

Its function is as follows. This is one of the proteins that bind and probably mediate the attachment of the 5S RNA into the large ribosomal subunit, where it forms part of the central protuberance. The sequence is that of Large ribosomal subunit protein uL18 from Leptothrix cholodnii (strain ATCC 51168 / LMG 8142 / SP-6) (Leptothrix discophora (strain SP-6)).